Here is a 346-residue protein sequence, read N- to C-terminus: Ribosomal RNA small subunit methyltransferase H (346 aa).

Residues 46 to 48 (GGY), D63, F90, D113, and Q120 contribute to the S-adenosyl-L-methionine site. The tract at residues 270–346 (GGSAGSRHMP…LPETNELARS (77 aa)) is disordered.

It belongs to the methyltransferase superfamily. RsmH family.

The protein resides in the cytoplasm. It catalyses the reaction cytidine(1402) in 16S rRNA + S-adenosyl-L-methionine = N(4)-methylcytidine(1402) in 16S rRNA + S-adenosyl-L-homocysteine + H(+). Specifically methylates the N4 position of cytidine in position 1402 (C1402) of 16S rRNA. The sequence is that of Ribosomal RNA small subunit methyltransferase H from Brucella suis (strain ATCC 23445 / NCTC 10510).